Here is a 477-residue protein sequence, read N- to C-terminus: Probable cytosol aminopeptidase (477 aa).

Residues Lys-245 and Asp-250 each coordinate Mn(2+). The active site involves Lys-257. The Mn(2+) site is built by Asp-268, Asp-327, and Glu-329. Residue Arg-331 is part of the active site.

Belongs to the peptidase M17 family. It depends on Mn(2+) as a cofactor.

It localises to the cytoplasm. It carries out the reaction Release of an N-terminal amino acid, Xaa-|-Yaa-, in which Xaa is preferably Leu, but may be other amino acids including Pro although not Arg or Lys, and Yaa may be Pro. Amino acid amides and methyl esters are also readily hydrolyzed, but rates on arylamides are exceedingly low.. The enzyme catalyses Release of an N-terminal amino acid, preferentially leucine, but not glutamic or aspartic acids.. Presumably involved in the processing and regular turnover of intracellular proteins. Catalyzes the removal of unsubstituted N-terminal amino acids from various peptides. In Exiguobacterium sibiricum (strain DSM 17290 / CCUG 55495 / CIP 109462 / JCM 13490 / 255-15), this protein is Probable cytosol aminopeptidase.